A 339-amino-acid polypeptide reads, in one-letter code: Ketol-acid reductoisomerase (NADP(+)) (339 aa).

Residues 1–182 enclose the KARI N-terminal Rossmann domain; sequence MRVYYDRDAD…GGGRSGVIET (182 aa). Residues 24–27, arginine 48, serine 51, threonine 53, and 83–86 contribute to the NADP(+) site; these read YGSQ and DELQ. Residue histidine 108 is part of the active site. Residue glycine 134 participates in NADP(+) binding. The KARI C-terminal knotted domain occupies 183 to 328; sequence TFKEECETDL…GKLRAMMPWI (146 aa). 4 residues coordinate Mg(2+): aspartate 191, glutamate 195, glutamate 227, and glutamate 231. Residue serine 252 coordinates substrate.

This sequence belongs to the ketol-acid reductoisomerase family. Mg(2+) is required as a cofactor.

The catalysed reaction is (2R)-2,3-dihydroxy-3-methylbutanoate + NADP(+) = (2S)-2-acetolactate + NADPH + H(+). It catalyses the reaction (2R,3R)-2,3-dihydroxy-3-methylpentanoate + NADP(+) = (S)-2-ethyl-2-hydroxy-3-oxobutanoate + NADPH + H(+). It participates in amino-acid biosynthesis; L-isoleucine biosynthesis; L-isoleucine from 2-oxobutanoate: step 2/4. It functions in the pathway amino-acid biosynthesis; L-valine biosynthesis; L-valine from pyruvate: step 2/4. Its function is as follows. Involved in the biosynthesis of branched-chain amino acids (BCAA). Catalyzes an alkyl-migration followed by a ketol-acid reduction of (S)-2-acetolactate (S2AL) to yield (R)-2,3-dihydroxy-isovalerate. In the isomerase reaction, S2AL is rearranged via a Mg-dependent methyl migration to produce 3-hydroxy-3-methyl-2-ketobutyrate (HMKB). In the reductase reaction, this 2-ketoacid undergoes a metal-dependent reduction by NADPH to yield (R)-2,3-dihydroxy-isovalerate. In Brucella suis (strain ATCC 23445 / NCTC 10510), this protein is Ketol-acid reductoisomerase (NADP(+)).